The primary structure comprises 191 residues: Lipoprotein signal peptidase (191 aa).

A run of 3 helical transmembrane segments spans residues 26–46 (VWFPAVLVLVLIALDQWLKAW), 84–104 (AVPLALGRILVGLGILSYLLW), and 110–130 (FLTVVLSMIAAGAIGNSIDGL). Catalysis depends on residues aspartate 137 and aspartate 163. Residues 156–176 (FPIFNIADMCVVGGTILLLVA) traverse the membrane as a helical segment.

The protein belongs to the peptidase A8 family.

It is found in the cell membrane. It carries out the reaction Release of signal peptides from bacterial membrane prolipoproteins. Hydrolyzes -Xaa-Yaa-Zaa-|-(S,diacylglyceryl)Cys-, in which Xaa is hydrophobic (preferably Leu), and Yaa (Ala or Ser) and Zaa (Gly or Ala) have small, neutral side chains.. It participates in protein modification; lipoprotein biosynthesis (signal peptide cleavage). This protein specifically catalyzes the removal of signal peptides from prolipoproteins. This chain is Lipoprotein signal peptidase, found in Deinococcus radiodurans (strain ATCC 13939 / DSM 20539 / JCM 16871 / CCUG 27074 / LMG 4051 / NBRC 15346 / NCIMB 9279 / VKM B-1422 / R1).